The following is a 275-amino-acid chain: 2,3,4,5-tetrahydropyridine-2,6-dicarboxylate N-succinyltransferase (275 aa).

Belongs to the transferase hexapeptide repeat family.

The protein localises to the cytoplasm. The enzyme catalyses (S)-2,3,4,5-tetrahydrodipicolinate + succinyl-CoA + H2O = (S)-2-succinylamino-6-oxoheptanedioate + CoA. Its pathway is amino-acid biosynthesis; L-lysine biosynthesis via DAP pathway; LL-2,6-diaminopimelate from (S)-tetrahydrodipicolinate (succinylase route): step 1/3. This is 2,3,4,5-tetrahydropyridine-2,6-dicarboxylate N-succinyltransferase from Ralstonia pickettii (strain 12J).